Consider the following 102-residue polypeptide: Small ribosomal subunit protein uS10 (102 aa).

It belongs to the universal ribosomal protein uS10 family. Part of the 30S ribosomal subunit.

Involved in the binding of tRNA to the ribosomes. The sequence is that of Small ribosomal subunit protein uS10 from Streptococcus pneumoniae (strain CGSP14).